Consider the following 331-residue polypeptide: Fructose-1,6-bisphosphatase class 1 (331 aa).

Residues glutamate 100, aspartate 120, leucine 122, and aspartate 123 each contribute to the Mg(2+) site. Residues 123-126 (DGSS), asparagine 216, tyrosine 243, 261-263 (YLY), and lysine 273 contribute to the substrate site. Position 279 (glutamate 279) interacts with Mg(2+).

This sequence belongs to the FBPase class 1 family. Homotetramer. Mg(2+) serves as cofactor.

The protein localises to the cytoplasm. The enzyme catalyses beta-D-fructose 1,6-bisphosphate + H2O = beta-D-fructose 6-phosphate + phosphate. Its pathway is carbohydrate biosynthesis; gluconeogenesis. This Amoebophilus asiaticus (strain 5a2) protein is Fructose-1,6-bisphosphatase class 1.